The chain runs to 297 residues: B-lymphocyte antigen CD20 (297 aa).

The Cytoplasmic portion of the chain corresponds to 1-51 (MTTPRNSMSGTLPVDPMKSPTAMYPVQKIIPKRMPSVVGPTQNFFMRESKT). Serine 36 carries the phosphoserine modification. Residues 52 to 72 (LGAVQIMNGLFHIALGSLLMI) form a helical membrane-spanning segment. At 73–75 (HTD) the chain is on the extracellular side. A helical transmembrane segment spans residues 76–96 (VCAPICITMWYPLWGGIMFII). The Cytoplasmic segment spans residues 97 to 122 (SGSLLAAADKNPRKSLVKGKMIMNSL). A helical membrane pass occupies residues 123–143 (SLFAAISGIIFLIMDIFNITI). Over 144 to 188 (SHFFKMENLNLIKAPMPYVDIHNCDPANPSEKNSLSIQYCGSIRS) the chain is Extracellular. A helical transmembrane segment spans residues 189-209 (VFLGVFAVMLIFAFFQKLVTA). At 210–297 (GIVENEWKKL…SSPIENDSIP (88 aa)) the chain is on the cytoplasmic side. Cysteine 220 is lipidated: S-palmitoyl cysteine. At serine 225 the chain carries Phosphoserine. The interval 274 to 297 (ELEINFAEPPQEQESSPIENDSIP) is disordered. Residues 281–290 (EPPQEQESSP) are compositionally biased toward low complexity.

Belongs to the MS4A family. Forms homotetramers. Interacts with the heavy and light chains of cell surface IgM, the antigen-binding components of the BCR. Post-translationally, phosphorylated. Might be functionally regulated by protein kinase(s). In terms of tissue distribution, expressed in PBMCs and lymph node from healthy dogs, in B-cells of canine lymphoma, but not in T-cell lymphoma cells and non-T and non-B-cell lymphoma cells.

It localises to the cell membrane. In terms of biological role, B-lymphocyte-specific membrane protein that plays a role in the regulation of cellular calcium influx necessary for the development, differentiation, and activation of B-lymphocytes. Functions as a store-operated calcium (SOC) channel component promoting calcium influx after activation by the B-cell receptor/BCR. This is B-lymphocyte antigen CD20 (MS4A1) from Canis lupus familiaris (Dog).